A 534-amino-acid chain; its full sequence is MVRPEDFNSLELDNSLTDGETVHEMMAHKAGLTYNDFNILPGFINFGVHDVSLETNITKDLKIKAPLVSSPMDTVTESGMAIVMALYGGIGIIHGNFPKPEDQAAEVLKVKRFKQGYVMQPHCLSRDSTAFDMIQIKKKYGYTGAPVTEDGRVGSKLIGMVTSRDFDFITMDVAGQKGTPISDTNDVTPTTPITRIMVSVDQLHLGHINDAPELSQKKLKEHRLGKLPIVNDNGELCALLCRSDLLKARDYPMASYDSKGQLLCGAAVNTRGESQYTVDRVVEAGVDVLIIDSSNGSSTYQISMLRYIKEKHPHVQVIAGNVVTRAQAKLLIDQGADGLRIGMGSGSICITQDVMAVGRAQGTAVYDVARYANQRGIPIVADGGIRDVGYITKAISLGASAVMMGGLLAATTEAPGEYFWGPGGVRVKKYRGMGSLDAMEAHASSQDRYFTAESDQIKVAQGVSATMKDRGSCHKFIPYLIRGVQHGMQDIGVRSLRDFREKVDNGIVKFERRSTNAQLEGGVHSLHSFEKRLY.

CBS domains follow at residues 117–181 (YVMQ…GTPI) and 190–255 (TTPI…PMAS). Residues 292–294 (DSS) and 342–344 (GMG) each bind NAD(+). K(+)-binding residues include Gly344 and Gly346. Ser347 serves as a coordination point for IMP. Residue Cys349 participates in K(+) binding. The active-site Thioimidate intermediate is the Cys349. IMP is bound by residues 382–384 (DGG), 405–406 (GG), and 430–434 (YRGMG). Catalysis depends on Arg448, which acts as the Proton acceptor. IMP is bound at residue Gln461. Positions 520, 521, and 522 each coordinate K(+).

This sequence belongs to the IMPDH/GMPR family. In terms of assembly, homotetramer. It depends on K(+) as a cofactor.

It is found in the cytoplasm. The catalysed reaction is IMP + NAD(+) + H2O = XMP + NADH + H(+). Its pathway is purine metabolism; XMP biosynthesis via de novo pathway; XMP from IMP: step 1/1. Mycophenolic acid (MPA) is a non-competitive inhibitor that prevents formation of the closed enzyme conformation by binding to the same site as the amobile flap. In contrast, mizoribine monophosphate (MZP) is a competitive inhibitor that induces the closed conformation. MPA is a potent inhibitor of mammalian IMPDHs but a poor inhibitor of the bacterial enzymes. MZP is a more potent inhibitor of bacterial IMPDH. Functionally, catalyzes the conversion of inosine 5'-phosphate (IMP) to xanthosine 5'-phosphate (XMP), the first committed and rate-limiting step in the de novo synthesis of guanine nucleotides, and therefore plays an important role in the regulation of cell growth. The chain is Inosine-5'-monophosphate dehydrogenase from Caenorhabditis elegans.